The sequence spans 278 residues: Release factor glutamine methyltransferase (278 aa).

Residues 117-121, D140, and N184 contribute to the S-adenosyl-L-methionine site; that span reads GTGSG. Residue 184-187 participates in substrate binding; it reads NPPY.

This sequence belongs to the protein N5-glutamine methyltransferase family. PrmC subfamily.

It catalyses the reaction L-glutaminyl-[peptide chain release factor] + S-adenosyl-L-methionine = N(5)-methyl-L-glutaminyl-[peptide chain release factor] + S-adenosyl-L-homocysteine + H(+). Methylates the class 1 translation termination release factors RF1/PrfA and RF2/PrfB on the glutamine residue of the universally conserved GGQ motif. The protein is Release factor glutamine methyltransferase of Staphylococcus aureus (strain NCTC 8325 / PS 47).